A 325-amino-acid chain; its full sequence is Diacylglycerol acyltransferase/mycolyltransferase Ag85B (325 aa).

The N-terminal stretch at 1-40 is a signal peptide; it reads MTDVSRKIRAWGRRLMIGTAAAVVLPGLVGLAGGAATAGA. 82–83 is a substrate binding site; that stretch reads LR. Residues 98–108 form a fibronectin-binding region; sequence FEWYYQSGLSI. Cys127 and Cys132 are disulfide-bonded. Substrate contacts are provided by Ser166 and Asp194. Ser166 (nucleophile) is an active-site residue. Residue Glu270 is part of the active site. Substrate contacts are provided by residues 272 to 275, Lys279, and 302 to 304; these read FVRS and HSW. His302 is an active-site residue.

Belongs to the mycobacterial A85 antigen family.

It localises to the secreted. It catalyses the reaction 2 alpha,alpha'-trehalose 6-mycolate = alpha,alpha'-trehalose 6,6'-bismycolate + alpha,alpha-trehalose. The enzyme catalyses an acyl-CoA + a 1,2-diacyl-sn-glycerol = a triacyl-sn-glycerol + CoA. Functionally, the antigen 85 proteins (FbpA, FbpB, FbpC) are responsible for the high affinity of mycobacteria for fibronectin, a large adhesive glycoprotein, which facilitates the attachment of M.tuberculosis to murine alveolar macrophages (AMs). They also help to maintain the integrity of the cell wall by catalyzing the transfer of mycolic acids to cell wall arabinogalactan and through the synthesis of alpha,alpha-trehalose dimycolate (TDM, cord factor). They catalyze the transfer of a mycoloyl residue from one molecule of alpha,alpha-trehalose monomycolate (TMM) to another TMM, leading to the formation of TDM. This chain is Diacylglycerol acyltransferase/mycolyltransferase Ag85B (fbpB), found in Mycobacterium tuberculosis (strain ATCC 25177 / H37Ra).